The chain runs to 60 residues: Putative per-hexamer repeat protein 1 (60 aa).

The chain is Putative per-hexamer repeat protein 1 (Phxr1) from Mus musculus (Mouse).